The sequence spans 424 residues: Gamma-glutamyl phosphate reductase (424 aa).

This sequence belongs to the gamma-glutamyl phosphate reductase family.

It localises to the cytoplasm. It carries out the reaction L-glutamate 5-semialdehyde + phosphate + NADP(+) = L-glutamyl 5-phosphate + NADPH + H(+). The protein operates within amino-acid biosynthesis; L-proline biosynthesis; L-glutamate 5-semialdehyde from L-glutamate: step 2/2. Its function is as follows. Catalyzes the NADPH-dependent reduction of L-glutamate 5-phosphate into L-glutamate 5-semialdehyde and phosphate. The product spontaneously undergoes cyclization to form 1-pyrroline-5-carboxylate. This chain is Gamma-glutamyl phosphate reductase, found in Dehalococcoides mccartyi (strain CBDB1).